We begin with the raw amino-acid sequence, 472 residues long: Argininosuccinate lyase (472 aa).

It belongs to the lyase 1 family. Argininosuccinate lyase subfamily.

The protein resides in the cytoplasm. The catalysed reaction is 2-(N(omega)-L-arginino)succinate = fumarate + L-arginine. It participates in amino-acid biosynthesis; L-arginine biosynthesis; L-arginine from L-ornithine and carbamoyl phosphate: step 3/3. The sequence is that of Argininosuccinate lyase from Mycolicibacterium paratuberculosis (strain ATCC BAA-968 / K-10) (Mycobacterium paratuberculosis).